Reading from the N-terminus, the 1441-residue chain is ABC transporter G family member 41 (1441 aa).

The span at 1–14 shows a compositional bias: basic and acidic residues; the sequence is MEDKKQQQQQQREE. The disordered stretch occupies residues 1–28; sequence MEDKKQQQQQQREEAEAEEEAPVVPSSL. The ABC transporter 1 domain occupies 159–432; that stretch reads ATARGLSRRP…FESCGFKCPE (274 aa). 192–199 provides a ligand contact to ATP; it reads GPPGCGKT. The region spanning 510 to 722 is the ABC transmembrane type-2 1 domain; the sequence is DLLKACFARE…AEIGLTGNEF (213 aa). The next 6 helical transmembrane spans lie at 528–548, 566–586, 600–620, 642–662, 672–692, and 758–778; these read FIYI…GTVF, SLFY…AIAV, FYPA…LSLV, FFCQ…LFRC, ASSV…GFII, and ASAL…GLTI. The region spanning 838 to 1090 is the ABC transporter 2 domain; that stretch reads ISFQDVNYYV…NVIHYFETIP (253 aa). An ATP-binding site is contributed by 883–890; that stretch reads GVTGAGKT. One can recognise an ABC transmembrane type-2 2 domain in the interval 1163–1379; it reads EQLKACIWKQ…TLNVFFTTQF (217 aa). 7 helical membrane passes run 1187-1207, 1215-1235, 1272-1292, 1300-1320, 1329-1349, 1357-1377, and 1413-1433; these read ILFI…QGDI, GLFT…INNC, IPYV…MIGY, FWFM…GMMI, VASI…GFIV, WWIW…FFTT, and LAAI…GLSI.

It belongs to the ABC transporter superfamily. ABCG family. PDR (TC 3.A.1.205) subfamily.

It localises to the membrane. May be a general defense protein. The chain is ABC transporter G family member 41 from Oryza sativa subsp. japonica (Rice).